Here is a 124-residue protein sequence, read N- to C-terminus: Large ribosomal subunit protein bL12 (124 aa).

Belongs to the bacterial ribosomal protein bL12 family. Homodimer. Part of the ribosomal stalk of the 50S ribosomal subunit. Forms a multimeric L10(L12)X complex, where L10 forms an elongated spine to which 2 to 4 L12 dimers bind in a sequential fashion. Binds GTP-bound translation factors.

Functionally, forms part of the ribosomal stalk which helps the ribosome interact with GTP-bound translation factors. Is thus essential for accurate translation. The polypeptide is Large ribosomal subunit protein bL12 (Ralstonia nicotianae (strain ATCC BAA-1114 / GMI1000) (Ralstonia solanacearum)).